The primary structure comprises 581 residues: Zinc finger protein 319 (581 aa).

Residues 1 to 22 (MSESWQQPPQTQPQQPQAPQPQ) show a composition bias toward low complexity. The tract at residues 1–39 (MSESWQQPPQTQPQQPQAPQPQHHAETPPALAEHTLPPG) is disordered. The segment at 75 to 99 (PKCGVCGHDLAHLSSPHEHQCLAGH) adopts a C2H2-type 1 zinc-finger fold. A C2H2-type 2; degenerate zinc finger spans residues 103–125 (FQCTQCLKIFHQATDLLEHQCVQ). Lys129 participates in a covalent cross-link: Glycyl lysine isopeptide (Lys-Gly) (interchain with G-Cter in SUMO2). 4 C2H2-type zinc fingers span residues 131-153 (FVCG…HSSH), 201-223 (YSCP…ERIH), 229-251 (YKCT…KRTH), and 257-279 (YKCA…MYAH). Position 280 is a phosphoserine (Ser280). A C2H2-type 7; degenerate zinc finger spans residues 286–308 (FRCNVCELHFKESSELLQHPCTP). C2H2-type zinc fingers lie at residues 314–336 (FRCG…ERTH), 342–364 (FKCD…RRTH), and 370–392 (FKCG…QHVH). The segment at 398–420 (FKCPVCQKGFDQSAELLRHKCLP) adopts a C2H2-type 11; degenerate zinc-finger fold. The C2H2-type 12 zinc-finger motif lies at 427–449 (FKCPVCNKAYKRASALQKHQLSH). The C2H2-type 13; degenerate zinc finger occupies 457–479 (LRCTLCERRFFSSSEFVQHRCDP). C2H2-type zinc fingers lie at residues 485-507 (LKCP…RRVH), 513-535 (YKCP…QGVH), and 541-563 (FKCV…SAQH).

It belongs to the krueppel C2H2-type zinc-finger protein family.

Its subcellular location is the nucleus. Its function is as follows. May be involved in transcriptional regulation. This chain is Zinc finger protein 319 (Znf319), found in Mus musculus (Mouse).